Consider the following 1404-residue polypeptide: DNA-directed RNA polymerase subunit beta' (1404 aa).

4 residues coordinate Zn(2+): C72, C74, C87, and C90. Mg(2+) contacts are provided by D463, D465, and D467. Zn(2+) is bound by residues C811, C885, C892, and C895.

The protein belongs to the RNA polymerase beta' chain family. As to quaternary structure, the RNAP catalytic core consists of 2 alpha, 1 beta, 1 beta' and 1 omega subunit. When a sigma factor is associated with the core the holoenzyme is formed, which can initiate transcription. Mg(2+) is required as a cofactor. Zn(2+) serves as cofactor.

The enzyme catalyses RNA(n) + a ribonucleoside 5'-triphosphate = RNA(n+1) + diphosphate. Its function is as follows. DNA-dependent RNA polymerase catalyzes the transcription of DNA into RNA using the four ribonucleoside triphosphates as substrates. This is DNA-directed RNA polymerase subunit beta' from Jannaschia sp. (strain CCS1).